The sequence spans 258 residues: Octanoyltransferase (258 aa).

The region spanning 42–226 (NLGADTLLLL…AVVAALDGAL (185 aa)) is the BPL/LPL catalytic domain. Residues 80–87 (RGGKITWH), 156–158 (AIG), and 169–171 (GFS) contribute to the substrate site. Cysteine 187 functions as the Acyl-thioester intermediate in the catalytic mechanism.

It belongs to the LipB family.

The protein localises to the cytoplasm. It catalyses the reaction octanoyl-[ACP] + L-lysyl-[protein] = N(6)-octanoyl-L-lysyl-[protein] + holo-[ACP] + H(+). It functions in the pathway protein modification; protein lipoylation via endogenous pathway; protein N(6)-(lipoyl)lysine from octanoyl-[acyl-carrier-protein]: step 1/2. Catalyzes the transfer of endogenously produced octanoic acid from octanoyl-acyl-carrier-protein onto the lipoyl domains of lipoate-dependent enzymes. Lipoyl-ACP can also act as a substrate although octanoyl-ACP is likely to be the physiological substrate. This chain is Octanoyltransferase, found in Rhodococcus opacus (strain B4).